A 338-amino-acid chain; its full sequence is Anthranilate phosphoribosyltransferase (338 aa).

5-phospho-alpha-D-ribose 1-diphosphate is bound by residues G81, 84 to 85 (GD), S89, 91 to 94 (NVST), 109 to 117 (KHGNRALSS), and A121. Position 81 (G81) interacts with anthranilate. S93 contributes to the Mg(2+) binding site. Anthranilate is bound at residue N112. An anthranilate-binding site is contributed by R167. D226 and E227 together coordinate Mg(2+).

This sequence belongs to the anthranilate phosphoribosyltransferase family. As to quaternary structure, homodimer. Mg(2+) serves as cofactor.

It catalyses the reaction N-(5-phospho-beta-D-ribosyl)anthranilate + diphosphate = 5-phospho-alpha-D-ribose 1-diphosphate + anthranilate. It participates in amino-acid biosynthesis; L-tryptophan biosynthesis; L-tryptophan from chorismate: step 2/5. Its function is as follows. Catalyzes the transfer of the phosphoribosyl group of 5-phosphorylribose-1-pyrophosphate (PRPP) to anthranilate to yield N-(5'-phosphoribosyl)-anthranilate (PRA). The polypeptide is Anthranilate phosphoribosyltransferase (Rhodopseudomonas palustris (strain ATCC BAA-98 / CGA009)).